The sequence spans 232 residues: Protein shisa-3 (232 aa).

A signal peptide spans 1–19 (MRLLGCFFLIFLTWGSARA). Topologically, residues 20-93 (QGEYCHGWLD…GVSAQPVYVP (74 aa)) are lumenal. A helical membrane pass occupies residues 94 to 114 (FLIVGSIFIAFIIVGSLVAVY). Over 115–232 (CCTCLRPKQT…NKSCPDFRQS (118 aa)) the chain is Cytoplasmic. Residues 146–185 (TSGNLRTPSRQSSTATSSTSTGGSVRRLSSSRADPGYLVS) form a disordered region. Over residues 151–177 (RTPSRQSSTATSSTSTGGSVRRLSSSR) the composition is skewed to low complexity.

Belongs to the shisa family. As to quaternary structure, interacts with fzd8 and fgfr1.

It is found in the endoplasmic reticulum membrane. Plays an essential role in the maturation of presomitic mesoderm cells by individual attenuation of both fgf and wnt signaling. Regulates head and somite developmen. Inhibits both wnt and fgf signaling through the regulation of protein maturation and cell surface transportation of their receptors within the endoplasmic reticulum. The sequence is that of Protein shisa-3 (shisa3) from Xenopus laevis (African clawed frog).